The sequence spans 535 residues: uncharacterized protein (535 aa).

The next 6 membrane-spanning stretches (helical) occupy residues 63–83 (LTGI…PSIY), 90–110 (VTFG…TYWI), 143–163 (VAAV…TLYG), 168–188 (VFVT…ATNC), 226–246 (SLGS…VLLV), and 258–278 (VLIL…ILAW). Residues 279–330 (LTAAPVRVVRAALKRVEQGDLRGDLVVFDGTELGELQRGFNAMVNGLRERER) enclose the HAMP domain. Positions 362 to 486 (AVVFVDIVGS…KPVNQAARLC (125 aa)) constitute a Guanylate cyclase domain.

The protein belongs to the adenylyl cyclase class-3 family.

The protein localises to the cell membrane. This is an uncharacterized protein from Mycobacterium tuberculosis (strain ATCC 25618 / H37Rv).